The following is a 162-amino-acid chain: Peroxiredoxin-2B (162 aa).

The 159-residue stretch at 4–162 (IAVGDVVPDG…SSADDILKAL (159 aa)) folds into the Thioredoxin domain. The Cysteine sulfenic acid (-SOH) intermediate role is filled by C51.

The protein belongs to the peroxiredoxin family. Prx5 subfamily. In terms of assembly, monomer. Expressed in all tissues but mostly in reproductive tissues such as buds, flowers, siliques and seeds.

The protein localises to the cytoplasm. It catalyses the reaction [glutaredoxin]-dithiol + a hydroperoxide = [glutaredoxin]-disulfide + an alcohol + H2O. Reduces hydrogen peroxide and alkyl hydroperoxides with reducing equivalents provided through the thioredoxin or glutaredoxin system. May be involved in intracellular redox signaling. Functionally, thiol-specific peroxidase that catalyzes the reduction of hydrogen peroxide and organic hydroperoxides to water and alcohols, respectively. Plays a role in cell protection against oxidative stress by detoxifying peroxides and as sensor of hydrogen peroxide-mediated signaling events. This is Peroxiredoxin-2B (PRXIIB) from Arabidopsis thaliana (Mouse-ear cress).